The primary structure comprises 1188 residues: DNA-directed RNA polymerase subunit beta (1188 aa).

It belongs to the RNA polymerase beta chain family. The RNAP catalytic core consists of 2 alpha, 1 beta, 1 beta' and 1 omega subunit. When a sigma factor is associated with the core the holoenzyme is formed, which can initiate transcription.

It catalyses the reaction RNA(n) + a ribonucleoside 5'-triphosphate = RNA(n+1) + diphosphate. Its function is as follows. DNA-dependent RNA polymerase catalyzes the transcription of DNA into RNA using the four ribonucleoside triphosphates as substrates. The polypeptide is DNA-directed RNA polymerase subunit beta (Streptococcus sanguinis (strain SK36)).